We begin with the raw amino-acid sequence, 1355 residues long: DNA-directed RNA polymerase subunit beta' (1355 aa).

Zn(2+)-binding residues include C219, C293, C300, and C303. A disordered region spans residues 1331 to 1355 (AEVEVDDEVDDDYEDDDEDDDDYED).

Belongs to the RNA polymerase beta' chain family. RpoC2 subfamily. In terms of assembly, in cyanobacteria the RNAP catalytic core is composed of 2 alpha, 1 beta, 1 beta', 1 gamma and 1 omega subunit. When a sigma factor is associated with the core the holoenzyme is formed, which can initiate transcription. Requires Zn(2+) as cofactor.

The enzyme catalyses RNA(n) + a ribonucleoside 5'-triphosphate = RNA(n+1) + diphosphate. Functionally, DNA-dependent RNA polymerase catalyzes the transcription of DNA into RNA using the four ribonucleoside triphosphates as substrates. The chain is DNA-directed RNA polymerase subunit beta' from Nostoc sp. (strain PCC 7120 / SAG 25.82 / UTEX 2576).